Consider the following 73-residue polypeptide: DNA-directed RNA polymerase subunit omega (73 aa).

It belongs to the RNA polymerase subunit omega family. In terms of assembly, the RNAP catalytic core consists of 2 alpha, 1 beta, 1 beta' and 1 omega subunit. When a sigma factor is associated with the core the holoenzyme is formed, which can initiate transcription.

It catalyses the reaction RNA(n) + a ribonucleoside 5'-triphosphate = RNA(n+1) + diphosphate. Promotes RNA polymerase assembly. Latches the N- and C-terminal regions of the beta' subunit thereby facilitating its interaction with the beta and alpha subunits. This is DNA-directed RNA polymerase subunit omega from Maridesulfovibrio salexigens (strain ATCC 14822 / DSM 2638 / NCIMB 8403 / VKM B-1763) (Desulfovibrio salexigens).